The chain runs to 491 residues: MNTQQLAKLRSIVPEMRRVRHIHFVGIGGAGMGGIAEVLANEGYQISGSDLAPNPVTQQLMNLGATIYFNHRPENVRDASVVVVSSAISADNPEIVAAHEARIPVIRRAEMLAELMRFRHGIAIAGTHGKTTTTAMVSSIYAEAGLDPTFVNGGLVKAAGVHARLGHGRYLIAEADESDASFLHLQPMVAIVTNIEADHMDTYQGDFENLKQTFINFLHNLPFYGRAVMCVDDPVIRELLPRVGRQTTTYGFSEDADVRVEDYQQIGPQGHFTLLRQDKEPMRVTLNAPGRHNALNAAAAVAVATEEGIDDEAILRALESFLGTGRRFDFLGEFPLEPVNGKSGTAMLVDDYGHHPTEVDATIKAARAGWPDKNLVMLFQPHRFTRTRDLYDDFANVLTQVDTLLMLEVYPAGEAPIPGADSRSLCRTIRGRGKIDPILVPDPAQVAEMLAPVLTGNDLILVQGAGNIGKIARSLAEIKLKPQTPEEEQHD.

126-132 (GTHGKTT) is a binding site for ATP.

The protein belongs to the MurCDEF family.

The protein resides in the cytoplasm. It carries out the reaction UDP-N-acetyl-alpha-D-muramate + L-alanine + ATP = UDP-N-acetyl-alpha-D-muramoyl-L-alanine + ADP + phosphate + H(+). It participates in cell wall biogenesis; peptidoglycan biosynthesis. Functionally, cell wall formation. This is UDP-N-acetylmuramate--L-alanine ligase from Shigella boydii serotype 18 (strain CDC 3083-94 / BS512).